We begin with the raw amino-acid sequence, 131 residues long: Glycine cleavage system H protein (131 aa).

In terms of domain architecture, Lipoyl-binding spans 24-106 (TVTIGITDHA…YEDGWIIKLK (83 aa)). Lysine 65 carries the N6-lipoyllysine modification.

This sequence belongs to the GcvH family. In terms of assembly, the glycine cleavage system is composed of four proteins: P, T, L and H. (R)-lipoate is required as a cofactor.

Functionally, the glycine cleavage system catalyzes the degradation of glycine. The H protein shuttles the methylamine group of glycine from the P protein to the T protein. The protein is Glycine cleavage system H protein of Chromohalobacter salexigens (strain ATCC BAA-138 / DSM 3043 / CIP 106854 / NCIMB 13768 / 1H11).